The sequence spans 194 residues: Imidazoleglycerol-phosphate dehydratase (194 aa).

It belongs to the imidazoleglycerol-phosphate dehydratase family.

The protein localises to the cytoplasm. It catalyses the reaction D-erythro-1-(imidazol-4-yl)glycerol 3-phosphate = 3-(imidazol-4-yl)-2-oxopropyl phosphate + H2O. It participates in amino-acid biosynthesis; L-histidine biosynthesis; L-histidine from 5-phospho-alpha-D-ribose 1-diphosphate: step 6/9. In Thermoanaerobacter sp. (strain X514), this protein is Imidazoleglycerol-phosphate dehydratase.